Consider the following 288-residue polypeptide: Proteasome assembly chaperone 1 (288 aa).

Ala2 carries the post-translational modification N-acetylalanine. The interval 12–38 is disordered; sequence TPCRAGTEEEEEEEDGNRETPEDREVR. Thr18 is subject to Phosphothreonine. Basic and acidic residues predominate over residues 28-38; the sequence is NRETPEDREVR. Residue Thr54 is modified to Phosphothreonine. Ser180 is subject to Phosphoserine. The residue at position 264 (Lys264) is an N6-acetyllysine.

This sequence belongs to the PSMG1 family. As to quaternary structure, forms a heterodimer with PSMG2. The PSMG1-PSMG2 heterodimer interacts directly with the PSMA5 and PSMA7 proteasome alpha subunits. In terms of processing, degraded by the proteasome upon completion of 20S proteasome maturation.

The protein localises to the cytoplasm. Its subcellular location is the endoplasmic reticulum. Chaperone protein which promotes assembly of the 20S proteasome as part of a heterodimer with PSMG2. The PSMG1-PSMG2 heterodimer binds to the PSMA5 and PSMA7 proteasome subunits, promotes assembly of the proteasome alpha subunits into the heteroheptameric alpha ring and prevents alpha ring dimerization. This Bos taurus (Bovine) protein is Proteasome assembly chaperone 1.